We begin with the raw amino-acid sequence, 148 residues long: 3-dehydroquinate dehydratase (148 aa).

The active-site Proton acceptor is the Tyr23. Substrate contacts are provided by Asn75, His81, and Asp88. His101 functions as the Proton donor in the catalytic mechanism. Residues Leu102–Ser103 and Arg112 contribute to the substrate site.

This sequence belongs to the type-II 3-dehydroquinase family. As to quaternary structure, homododecamer.

It catalyses the reaction 3-dehydroquinate = 3-dehydroshikimate + H2O. The protein operates within metabolic intermediate biosynthesis; chorismate biosynthesis; chorismate from D-erythrose 4-phosphate and phosphoenolpyruvate: step 3/7. Catalyzes a trans-dehydration via an enolate intermediate. The chain is 3-dehydroquinate dehydratase from Ectopseudomonas mendocina (strain ymp) (Pseudomonas mendocina).